Reading from the N-terminus, the 156-residue chain is ADKAASGVLTKLPQKQIQEMKEAFSMLDVDRDGFVNKDDLKAISEQLGRTPDDKELTAMLKEAPGPLNFTMFLSIFSDKLSGTDSEETIRNAFAMFDELETKKLNIEYIKDLLENMGDNFTKDEMRMTFKEAPVTGGKFDYVKFTAMIKGSGEDDA.

Position 1 is a blocked amino end (Ala) (Ala1). 2 EF-hand domains span residues 15–50 and 84–119; these read KQIQ…LGRT and DSEE…MGDN. Ca(2+) contacts are provided by Asp28, Asp30, Asp32, and Asp39.

In molluscan muscle, calcium regulation is associated with myosin rather than with actin. Muscle myosin contains two types of light chains: the catalytic light chain, essential for ATPase activity, and the regulatory light chain, a calcium-binding protein responsible for Ca(2+) dependent binding and Ca(2+) dependent Mg-ATPase activity. This chain is Myosin regulatory light chain, striated adductor muscle, found in Chlamys nipponensis akazara (Akazara scallop).